We begin with the raw amino-acid sequence, 75 residues long: MIGDLLIFGTLLVNAGAVLNFKLKRKESQGFGDESRAPATGDNIREFLLSLRYFRVFIALWNIFIMFCMIVLFGS.

Residues 1–17 (MIGDLLIFGTLLVNAGA) form the signal peptide. The Extracellular segment spans residues 18–53 (VLNFKLKRKESQGFGDESRAPATGDNIREFLLSLRY). A helical transmembrane segment spans residues 54–74 (FRVFIALWNIFIMFCMIVLFG). Serine 75 is a topological domain (cytoplasmic).

This sequence belongs to the SMIM7 family.

It localises to the membrane. The polypeptide is Small integral membrane protein 7 (smim7) (Siniperca chuatsi (Mandarin fish)).